The sequence spans 247 residues: Capsid protein (247 aa).

The Bipartite nuclear localization signal signature appears at 3 to 20; that stretch reads KRDAPWRLMAGTSKVSRS. The Nuclear localization signal signature appears at 31–45; the sequence is KRDAWVNRPMYRKPR. The Nuclear export signal signature appears at 92–113; it reads ITHRVGKRFCVKSVYILGKIWM. The Bipartite nuclear localization signal motif lies at 191–238; it reads RRFWKVNNNVVYNHQEAGKYENHTENALLLYMACTHASNPVYATLKIR.

This sequence belongs to the geminiviridae capsid protein family. In terms of assembly, homomultimer. Binds to single-stranded and double-stranded viral DNA. Interacts (via nuclear localization signals) with host importin alpha-1a.

The protein resides in the virion. The protein localises to the host nucleus. Its function is as follows. Encapsidates the viral DNA into characteristic twinned ('geminate') particles. Binds the genomic viral ssDNA and shuttles it into and out of the cell nucleus. The CP of bipartite geminiviruses is not required for cell-to-cell or systemic movement. In Solanum lycopersicum (Tomato), this protein is Capsid protein.